A 658-amino-acid polypeptide reads, in one-letter code: Pentatricopeptide repeat-containing protein At1g69290 (658 aa).

Disordered regions lie at residues 1-23 (MFRK…ESPS) and 39-61 (TLSP…KSSF). Polar residues predominate over residues 50 to 61 (PKTLTPDQKSSF). PPR repeat units lie at residues 214-249 (DLVA…GVKP), 250-284 (DELS…GFAS), 285-320 (RRIL…GEES), 323-353 (SVET…AQKL), 361-395 (DSSV…GGGS), 397-431 (GIGV…GLQL), 432-466 (DVEI…RVVD), 467-497 (LKGS…VVED), 503-537 (NSHD…RYEP), 538-568 (NNQT…IKGK), and 581-615 (DHAL…KIFV).

This sequence belongs to the PPR family. P subfamily.

This is Pentatricopeptide repeat-containing protein At1g69290 from Arabidopsis thaliana (Mouse-ear cress).